Here is an 809-residue protein sequence, read N- to C-terminus: MNHTARKRQGWQRSVSQKLAGAVVQGIACMGASAPLLLMPAWATAAAQAQADFDIPAGPLAPALAHFGQSAHILLSYPTALTEGRSTSGLAGRFDIDQGLAILLAGTGLEASRGANASYSLQASASTGALELSAVSISGKAPGSTTEGTGLYTTYSSSSSTRLNLTPRETPQSLTVMTRQRLDDQRLTNLTDALEATPGITVVRDGLGSESDSYWSRGFAIQNYEVDGVPTSTRLDNYSQSMAMFDRVEIVRGATGLISGMGNPSATINLIRKRPTAEAQASITGEAGNWDRYGTGFDVSGPLTETGNIRGRFVADYKTEKAWIDRYNQQSQLMYGITEFDLSEDTLLTVGFSYLRSDIDSPLRSGLPTRFSTGERTNLKRSLNAAPDWSYNDHEQTSFFTSIEQQLGNGWSGKIELTHAENKFDELFNFAMGELNPDGSGLSQLPVRFSGTPRQDNLDLYATGPFSLFGREHELITGMTLSQYRENTPSWGGWRYDYAGSPAGAIDNLFNWDGKSAKPAFVESGKSSIDEDQYAAYLTSRFSVTDDLSLILGSRLINWKRDTSDRPYGGEETEVNREENGVFIPYAGVGYDLDDTWSLYASYTKIFNPQGAWVTDESNKPLDPMEGVGYELGIKGTHLNGKLNSSLAVFKLEQDNLAIWQHDNVYSAEQDTTSKGIELELNGELAEGWQASAGYSYSVTTDADDQRINTNLPRNSFKTFTSYRLHGPLDKITIGGGVNWQSKVGADLHTFSQGSYAVTNLMARYDINQHLSASVNLNNVFDREYYSQSGLYGVYGTPRNVMTSFKYSF.

Residues 1-45 (MNHTARKRQGWQRSVSQKLAGAVVQGIACMGASAPLLLMPAWATA) form the signal peptide. Positions 166 to 273 (TPRETPQSLT…PSATINLIRK (108 aa)) constitute a TBDR plug domain. Residues 278 to 809 (EAQASITGEA…NVMTSFKYSF (532 aa)) enclose the TBDR beta-barrel domain. Positions 792–809 (YGVYGTPRNVMTSFKYSF) match the TonB C-terminal box motif.

This sequence belongs to the TonB-dependent receptor family.

The protein resides in the cell outer membrane. In terms of biological role, specific receptor for the siderophores ferric pyoverdines (pseudobactins) BN8 and BN7, iron chelating molecules that allow the organism to extract iron from the environment, especially under iron-restricted conditions. This Pseudomonas putida (Arthrobacter siderocapsulatus) protein is Ferric-pyoverdine BN7/BN8 receptor (pupB).